Reading from the N-terminus, the 1404-residue chain is Probable GPI-anchored adhesin-like protein PGA55 (1404 aa).

A signal peptide spans 1–19 (MVLLCKYKVSWVFVLSVAG). 87 consecutive repeat copies span residues 104–109 (VSSSSS), 136–141 (VSSSSE), 156–161 (VSSSSK), 162–167 (VSSSSE), 183–188 (VSSSSQ), 196–201 (VSSSSE), 203–208 (VSSSSE), 209–214 (VSSSSE), 216–221 (VSSSSE), 222–227 (VSSSSE), 228–233 (VSSSSE), 234–239 (VSSSSQ), 247–252 (VSSSSE), 253–258 (VSSSSS), 261–266 (VSSSSE), 267–272 (VSSSSE), 274–279 (VSSSSE), 280–285 (VSSSSE), 286–291 (VSSSSE), 292–297 (VSSSSE), 298–303 (VSSSSE), 304–309 (VSSSSQ), 317–322 (VSSSSE), 324–329 (VSSSSE), 330–335 (VSSSSE), 336–341 (VSSSSE), 343–348 (VSSSSE), 349–354 (VSSSSE), 355–360 (VSSSSE), 361–366 (VSSSSQ), 374–379 (VSSSSE), 380–385 (VSSSSS), 388–393 (VSSSSE), 394–399 (VSSSSE), 401–406 (VSSSSE), 407–412 (VSSSSE), 413–418 (VSSSSE), 419–424 (VSSSSE), 425–430 (VSSSSE), 431–436 (VSSSSQ), 444–449 (VSSSSE), 450–455 (VSSSSE), 457–462 (VSSSSE), 463–468 (VSSSSE), 469–474 (VSSSSE), 475–480 (VSSSSQ), 488–493 (VSSSSE), 494–500 (VSSSSSE), 502–507 (VSSSSE), 508–513 (VSSSSE), 515–520 (VSSSSE), 521–526 (VSSSSE), 527–532 (VSSSSE), 533–538 (VSSSSQ), 546–551 (VSSSSE), 552–557 (VSSSSS), 560–565 (VSSSSE), 566–571 (VSSSSE), 573–578 (VSSSSE), 579–584 (VSSSSE), 585–590 (VSSSSE), 591–596 (VSSSSQ), 604–609 (VSSSSE), 611–616 (VSSSSE), 617–622 (VSSSSE), 623–628 (VSSSSE), 629–634 (VSSSSE), 635–640 (VSSSSE), 641–646 (VSSSSQ), 654–659 (VSSSSE), 660–665 (VSSSSS), 668–673 (VSSSSE), 674–679 (VSSSSE), 681–686 (VSSSSE), 687–692 (VSSSSE), 693–698 (VSSSSE), 699–704 (VSSSSQ), 712–717 (VSSSSE), 719–724 (VSSSSE), 725–730 (VSSSSE), 731–736 (VSSSSE), 737–742 (VSSSSE), 743–748 (VSSSSE), 749–754 (VSSSSE), 771–776 (VTSSSE), 777–782 (VSSSSQ), and 797–802 (VSSSSE). Residues 104–541 (VSSSSSEVIS…EVSSSSQVTS (438 aa)) are 88 X 6 AA approximate tandem repeats. The tract at residues 113–833 (SSSSEEASSS…VSSSSASSEV (721 aa)) is disordered. Residue Asn817 is glycosylated (N-linked (GlcNAc...) asparagine). The 1-88 repeat unit spans residues 824 to 829 (VSSSSA). N-linked (GlcNAc...) asparagine glycans are attached at residues Asn994 and Asn1074. Asn1382 carries GPI-anchor amidated asparagine lipidation. Residues 1383-1404 (AASRQSFNYKFIVGLILAYIIA) constitute a propeptide, removed in mature form.

It is found in the cell membrane. Functionally, predicted GPI-anchored adhesin-like protein which may be involved in filamentous growth and chlamydospore formation. The sequence is that of Probable GPI-anchored adhesin-like protein PGA55 (PGA55) from Candida albicans (strain SC5314 / ATCC MYA-2876) (Yeast).